The following is a 412-amino-acid chain: Dihydrolipoyllysine-residue acetyltransferase component of pyruvate dehydrogenase complex (412 aa).

One can recognise a Lipoyl-binding domain in the interval 2–78 (PIKILMPVLS…PVNSLIAVLS (77 aa)). Lys43 bears the N6-lipoyllysine mark. One can recognise a Peripheral subunit-binding (PSBD) domain in the interval 132-169 (FASPLAKRLAKMGNIRLESVKGSGPHGRIVKQDILSYT). Residue His385 is part of the active site.

This sequence belongs to the 2-oxoacid dehydrogenase family. Forms a 24-polypeptide structural core with octahedral symmetry. It depends on (R)-lipoate as a cofactor.

It catalyses the reaction N(6)-[(R)-dihydrolipoyl]-L-lysyl-[protein] + acetyl-CoA = N(6)-[(R)-S(8)-acetyldihydrolipoyl]-L-lysyl-[protein] + CoA. In terms of biological role, the pyruvate dehydrogenase complex catalyzes the overall conversion of pyruvate to acetyl-CoA and CO(2). It contains multiple copies of three enzymatic components: pyruvate dehydrogenase (E1), dihydrolipoamide acetyltransferase (E2) and lipoamide dehydrogenase (E3). The chain is Dihydrolipoyllysine-residue acetyltransferase component of pyruvate dehydrogenase complex (pdhC) from Rickettsia felis (strain ATCC VR-1525 / URRWXCal2) (Rickettsia azadi).